The following is a 2298-amino-acid chain: Protein Ycf2 (2298 aa).

ATP is bound at residue 1638-1645; sequence GSIGTGRS.

Belongs to the Ycf2 family.

The protein resides in the plastid. It is found in the chloroplast stroma. Probable ATPase of unknown function. Its presence in a non-photosynthetic plant (Epifagus virginiana) and experiments in tobacco indicate that it has an essential function which is probably not related to photosynthesis. The protein is Protein Ycf2 of Gossypium barbadense (Sea Island cotton).